The sequence spans 509 residues: Histidine--tRNA ligase, cytoplasmic (509 aa).

Alanine 2 bears the N-acetylalanine mark. The 57-residue stretch at 3 to 59 (ERAALEELVKLQGERVRGLKQQKASAELIEEEVAKLLKLKAQLGPDESKQKFVLKTP) folds into the WHEP-TRS domain. Serine 66 carries the post-translational modification Phosphoserine. Residues 130–132 (DLT), arginine 157, glutamine 173, aspartate 177, arginine 326, and 330–331 (YY) each bind L-histidine. Serine 356 is subject to Phosphoserine.

This sequence belongs to the class-II aminoacyl-tRNA synthetase family. Homodimer.

It is found in the cytoplasm. It carries out the reaction tRNA(His) + L-histidine + ATP = L-histidyl-tRNA(His) + AMP + diphosphate + H(+). Its function is as follows. Catalyzes the ATP-dependent ligation of histidine to the 3'-end of its cognate tRNA, via the formation of an aminoacyl-adenylate intermediate (His-AMP). Plays a role in axon guidance. The sequence is that of Histidine--tRNA ligase, cytoplasmic (HARS1) from Pongo abelii (Sumatran orangutan).